Here is a 191-residue protein sequence, read N- to C-terminus: MKKQLLSALIGASLLAPMAASAADYVIDREGAHASITFKVSHLGYSYVVGRFNDFSGDFSYDAAKPTAAKVNVKVNTLSVDSNHAERDKHIRSADFLNTSKFAQATFTSTTVEDKGNGDLVINGNLTLNGVTKPLAINAHAVGEGQDPWGGYRAGFTGTTTFAMKDFGIKMDLGPASSHVELDLVVEGVRK.

The signal sequence occupies residues 1–22 (MKKQLLSALIGASLLAPMAASA).

Belongs to the UPF0312 family. Type 1 subfamily.

The protein localises to the periplasm. This chain is UPF0312 protein Sbal_3041, found in Shewanella baltica (strain OS155 / ATCC BAA-1091).